Consider the following 96-residue polypeptide: Co-chaperonin GroES (96 aa).

The protein belongs to the GroES chaperonin family. In terms of assembly, heptamer of 7 subunits arranged in a ring. Interacts with the chaperonin GroEL.

It is found in the cytoplasm. Functionally, together with the chaperonin GroEL, plays an essential role in assisting protein folding. The GroEL-GroES system forms a nano-cage that allows encapsulation of the non-native substrate proteins and provides a physical environment optimized to promote and accelerate protein folding. GroES binds to the apical surface of the GroEL ring, thereby capping the opening of the GroEL channel. The sequence is that of Co-chaperonin GroES from Paraburkholderia phymatum (strain DSM 17167 / CIP 108236 / LMG 21445 / STM815) (Burkholderia phymatum).